The following is a 319-amino-acid chain: Large ribosomal subunit protein uL10 (319 aa).

The tract at residues 286-319 (AGDSGASAAPKEEEKAAEPEEESDEEMGFSLFDD) is disordered. The span at 304 to 319 (PEEESDEEMGFSLFDD) shows a compositional bias: acidic residues.

Belongs to the universal ribosomal protein uL10 family. In terms of assembly, P0 forms a pentameric complex by interaction with dimers of P1 and P2. In terms of processing, phosphorylated.

Functionally, ribosomal protein P0 is the functional equivalent of E.coli protein L10. This Zea mays (Maize) protein is Large ribosomal subunit protein uL10 (RP-P0).